A 223-amino-acid polypeptide reads, in one-letter code: UPF0173 metal-dependent hydrolase TV0864 (223 aa).

The protein belongs to the UPF0173 family.

The sequence is that of UPF0173 metal-dependent hydrolase TV0864 from Thermoplasma volcanium (strain ATCC 51530 / DSM 4299 / JCM 9571 / NBRC 15438 / GSS1).